The primary structure comprises 385 residues: Glucans biosynthesis protein C (385 aa).

A run of 10 helical transmembrane segments spans residues 17–37 (AWLM…SHTW), 60–80 (MQVF…RYPL), 91–111 (VGIP…IMLQ), 137–157 (ISHL…VWIF), 173–193 (KFSM…YAVI), 212–232 (FIVM…LAFI), 239–259 (LFTT…VAYL), 274–294 (TESV…FSFG), 311–331 (ASLF…AYIT), and 338–358 (WLGF…LYEI).

The protein belongs to the acyltransferase 3 family. OpgC subfamily.

It localises to the cell membrane. It functions in the pathway glycan metabolism; osmoregulated periplasmic glucan (OPG) biosynthesis. Necessary for the succinyl substitution of periplasmic glucans. Could catalyze the transfer of succinyl residues from the cytoplasmic side of the membrane to the nascent glucan backbones on the periplasmic side of the membrane. The chain is Glucans biosynthesis protein C from Shigella sonnei (strain Ss046).